The following is a 254-amino-acid chain: MSTQPAPPPEAPSNLLHVQFKNPEFLSYLSHLQSTGQVSLGRDSSCAKFDPAHPLTEHNVMAYFATSPFFDRRSNNEQIRMQNIANGIQNLSGGMGAKQEEQELKRFTGLEFVLVHSREPTCFVVQKRWRTSPTETTPLAAYYVINDSIYQAPDLYSILATRLQSTVYALRMSLSTQRRARPSFDPRRGHHGRFIVADAPTSIDADSNRTCTTQSTHTHHADDHTPQLEHQQDHIHPPPPAAFTQPQLKKARFD.

Over residues 205–216 the composition is skewed to polar residues; that stretch reads ADSNRTCTTQST. A disordered region spans residues 205 to 254; that stretch reads ADSNRTCTTQSTHTHHADDHTPQLEHQQDHIHPPPPAAFTQPQLKKARFD. Residues 219–236 show a composition bias toward basic and acidic residues; sequence HHADDHTPQLEHQQDHIH.

It belongs to the Mediator complex subunit 6 family. As to quaternary structure, component of the Mediator complex.

Its subcellular location is the nucleus. In terms of biological role, component of the Mediator complex, a coactivator involved in the regulated transcription of nearly all RNA polymerase II-dependent genes. Mediator functions as a bridge to convey information from gene-specific regulatory proteins to the basal RNA polymerase II transcription machinery. Mediator is recruited to promoters by direct interactions with regulatory proteins and serves as a scaffold for the assembly of a functional preinitiation complex with RNA polymerase II and the general transcription factors. The sequence is that of Mediator of RNA polymerase II transcription subunit 6 (MED6) from Mycosarcoma maydis (Corn smut fungus).